The primary structure comprises 505 residues: Maturase K (505 aa).

The protein belongs to the intron maturase 2 family. MatK subfamily.

Its subcellular location is the plastid. It is found in the chloroplast. In terms of biological role, usually encoded in the trnK tRNA gene intron. Probably assists in splicing its own and other chloroplast group II introns. The sequence is that of Maturase K from Froelichia floridana (Florida snake-cotton).